Here is a 198-residue protein sequence, read N- to C-terminus: MKFNATLRSVQGTSASRRLRRAGRVPAIVYGGTAAPLNIELDHNEIFHALRKEQFHASILTMALEGGANEQVLLRSVQWHPFKQQVLHVDFQRVDANQALHTKVPLHFVNAETSPAVKLSGAIISHVVTEVEVTCLPQSLPQFIEVDLGNLLGGGSIHQKDIVLPKGVTFTHPNDEQVIVSAVVKGGAADDAEEAPAA.

This sequence belongs to the bacterial ribosomal protein bL25 family. CTC subfamily. As to quaternary structure, part of the 50S ribosomal subunit; part of the 5S rRNA/L5/L18/L25 subcomplex. Contacts the 5S rRNA. Binds to the 5S rRNA independently of L5 and L18.

In terms of biological role, this is one of the proteins that binds to the 5S RNA in the ribosome where it forms part of the central protuberance. The chain is Large ribosomal subunit protein bL25 from Bordetella avium (strain 197N).